The following is a 276-amino-acid chain: Putative pyridoxine kinase (276 aa).

Asn139 is an ATP binding site. Glu142 is a Mg(2+) binding site. ATP-binding positions include 176 to 180, Asp188, Gly213, and Lys238; that span reads KGGKA.

This sequence belongs to the ThiD family.

It catalyses the reaction pyridoxal + ATP = pyridoxal 5'-phosphate + ADP + H(+). Its function is as follows. Phosphorylates B6 vitamers; functions in a salvage pathway. Uses pyridoxal, pyridoxine, and pyridoxamine as substrates. In Staphylococcus epidermidis (strain ATCC 12228 / FDA PCI 1200), this protein is Putative pyridoxine kinase (pdxK).